The sequence spans 814 residues: Exostosin-like-3 homolog (814 aa).

Residues 1 to 14 lie on the Cytoplasmic side of the membrane; the sequence is MAIKLNGSSRSFVP. Residues 15–35 form a helical; Signal-anchor for type II membrane protein membrane-spanning segment; it reads SLRVSAFLIFIFFVITYIIIY. Residues asparagine 36, asparagine 227, asparagine 297, asparagine 322, asparagine 454, and asparagine 492 are each glycosylated (N-linked (GlcNAc...) asparagine). The Lumenal segment spans residues 36-814; sequence NVSFSEPSWI…QNHQKCFKYV (779 aa). Arginine 570, asparagine 595, asparagine 620, arginine 625, aspartate 641, aspartate 642, and aspartate 643 together coordinate UDP-N-acetyl-alpha-D-glucosamine. Aspartate 643 is a binding site for Mn(2+). The N-linked (GlcNAc...) asparagine glycan is linked to asparagine 685. The cysteines at positions 726 and 774 are disulfide-linked. The UDP-N-acetyl-alpha-D-glucosamine site is built by glutamate 727, aspartate 728, and arginine 771. Aspartate 728 is an active-site residue.

Belongs to the glycosyltransferase 47 family. Interacts with rib-1. It depends on Mn(2+) as a cofactor.

Its subcellular location is the endoplasmic reticulum membrane. It localises to the golgi apparatus membrane. It catalyses the reaction 3-O-(beta-D-GlcA-(1-&gt;3)-beta-D-Gal-(1-&gt;3)-beta-D-Gal-(1-&gt;4)-beta-D-Xyl)-L-seryl-[protein] + UDP-N-acetyl-alpha-D-glucosamine = 3-O-(alpha-D-GlcNAc-(1-&gt;4)-beta-D-GlcA-(1-&gt;3)-beta-D-Gal-(1-&gt;3)-beta-D-Gal-(1-&gt;4)-beta-D-Xyl)-L-seryl-[protein] + UDP + H(+). It carries out the reaction 3-O-{[(1-&gt;4)-beta-D-GlcA-(1-&gt;4)-alpha-D-GlcNAc](n)-(1-&gt;4)-beta-D-GlcA-(1-&gt;3)-beta-D-Gal-(1-&gt;3)-beta-D-Gal-(1-&gt;4)-beta-D-Xyl}-L-seryl-[protein] + UDP-N-acetyl-alpha-D-glucosamine = 3-O-{alpha-D-GlcNAc-[(1-&gt;4)-beta-D-GlcA-(1-&gt;4)-alpha-D-GlcNAc](n)-(1-&gt;4)-beta-D-GlcA-(1-&gt;3)-beta-D-Gal-(1-&gt;3)-beta-D-Gal-(1-&gt;4)-beta-D-Xyl}-L-seryl-[protein] + UDP + H(+). The enzyme catalyses 3-O-{alpha-D-GlcNAc-[(1-&gt;4)-beta-D-GlcA-(1-&gt;4)-alpha-D-GlcNAc](n)-(1-&gt;4)-beta-D-GlcA-(1-&gt;3)-beta-D-Gal-(1-&gt;3)-beta-D-Gal-(1-&gt;4)-beta-D-Xyl}-L-seryl-[protein] + UDP-alpha-D-glucuronate = 3-O-{[(1-&gt;4)-beta-D-GlcA-(1-&gt;4)-alpha-D-GlcNAc](n+1)-(1-&gt;4)-beta-D-GlcA-(1-&gt;3)-beta-D-Gal-(1-&gt;3)-beta-D-Gal-(1-&gt;4)-beta-D-Xyl}-L-seryl-[protein] + UDP + H(+). Its pathway is glycan metabolism; heparan sulfate biosynthesis. Binding to rib-1 is required for GlcAT-II activity and for increasing GlcNAc-II activity in vitro. Functionally, glycosyltransferase required for the biosynthesis of heparan sulfate. Initiates heparan sulfate synthesis by transferring GlcNAc to the (GlcA-Gal-Gal-Xyl-)Ser core linker (GlcNAcT-I activity). In association with rib-1, is also responsible for the alternating addition of beta-1-4-linked glucuronic acid (GlcA) and alpha-1-4-linked N-acetylglucosamine (GlcNAc) units to nascent heparan sulfate chains (GlcNAcT-II and GlcAT-II activities). Required for normal ventral epidermal enclosure during the early stages of embryonic development. In addition, involved in the elongation of the pharyngeal isthmus during the later stages of embryonic development. Involved in the directed migration of hermaphrodite-specific neurons. In Caenorhabditis elegans, this protein is Exostosin-like-3 homolog (rib-2).